We begin with the raw amino-acid sequence, 445 residues long: ATP synthase subunit b-delta (445 aa).

The ATP synthase subunit b stretch occupies residues 1–168 (MSIFIGQLIG…PSSAVLEAGA (168 aa)). A helical membrane pass occupies residues 3-23 (IFIGQLIGFAVIVFILVKWVV). The ATP synthase subunit delta stretch occupies residues 169–445 (SLNLRAASRE…LAAARTGLPD (277 aa)).

It in the N-terminal section; belongs to the ATPase B chain family. This sequence in the C-terminal section; belongs to the ATPase delta chain family. F-type ATPases have 2 components, F(1) - the catalytic core - and F(0) - the membrane proton channel. F(1) has five subunits: alpha(3), beta(3), gamma(1), delta(1), epsilon(1). F(0) has three main subunits: a(1), b(2) and c(10-14). The alpha and beta chains form an alternating ring which encloses part of the gamma chain. F(1) is attached to F(0) by a central stalk formed by the gamma and epsilon chains, while a peripheral stalk is formed by the delta and b chains.

It localises to the cell membrane. F(1)F(0) ATP synthase produces ATP from ADP in the presence of a proton or sodium gradient. F-type ATPases consist of two structural domains, F(1) containing the extramembraneous catalytic core and F(0) containing the membrane proton channel, linked together by a central stalk and a peripheral stalk. During catalysis, ATP synthesis in the catalytic domain of F(1) is coupled via a rotary mechanism of the central stalk subunits to proton translocation. In terms of biological role, this fusion protein includes a component of the F(0) channel (subunit b) and of the F(1) subunit (subunit delta). Two copies of subunit b and one of delta together form the peripheral 'stator' stalk which links F(1) to F(0). The protein is ATP synthase subunit b-delta (atpFH) of Mycolicibacterium vanbaalenii (strain DSM 7251 / JCM 13017 / BCRC 16820 / KCTC 9966 / NRRL B-24157 / PYR-1) (Mycobacterium vanbaalenii).